A 338-amino-acid polypeptide reads, in one-letter code: Glycerol-3-phosphate dehydrogenase [NAD(P)+] (338 aa).

The NADPH site is built by Ser14, Tyr15, His35, and Lys109. Lys109, Gly138, and Thr140 together coordinate sn-glycerol 3-phosphate. Residue Ala142 participates in NADPH binding. The sn-glycerol 3-phosphate site is built by Lys194, Asp247, Ser257, Arg258, and Asn259. The active-site Proton acceptor is the Lys194. Arg258 lines the NADPH pocket. Val282 and Glu284 together coordinate NADPH.

The protein belongs to the NAD-dependent glycerol-3-phosphate dehydrogenase family.

It localises to the cytoplasm. The enzyme catalyses sn-glycerol 3-phosphate + NAD(+) = dihydroxyacetone phosphate + NADH + H(+). It catalyses the reaction sn-glycerol 3-phosphate + NADP(+) = dihydroxyacetone phosphate + NADPH + H(+). Its pathway is membrane lipid metabolism; glycerophospholipid metabolism. Its function is as follows. Catalyzes the reduction of the glycolytic intermediate dihydroxyacetone phosphate (DHAP) to sn-glycerol 3-phosphate (G3P), the key precursor for phospholipid synthesis. This chain is Glycerol-3-phosphate dehydrogenase [NAD(P)+], found in Shewanella baltica (strain OS155 / ATCC BAA-1091).